We begin with the raw amino-acid sequence, 288 residues long: Fructose-bisphosphate aldolase (288 aa).

Position 49 (serine 49) interacts with D-glyceraldehyde 3-phosphate. Catalysis depends on aspartate 84, which acts as the Proton donor. Zn(2+) contacts are provided by histidine 85, aspartate 105, glutamate 135, and histidine 177. A dihydroxyacetone phosphate-binding site is contributed by glycine 178. Histidine 206 lines the Zn(2+) pocket. Dihydroxyacetone phosphate contacts are provided by residues 207–209 and 228–231; these read GGS and NINT.

It belongs to the class II fructose-bisphosphate aldolase family. As to quaternary structure, homodimer. Zn(2+) serves as cofactor.

It catalyses the reaction beta-D-fructose 1,6-bisphosphate = D-glyceraldehyde 3-phosphate + dihydroxyacetone phosphate. The protein operates within carbohydrate degradation; glycolysis; D-glyceraldehyde 3-phosphate and glycerone phosphate from D-glucose: step 4/4. Functionally, catalyzes the aldol condensation of dihydroxyacetone phosphate (DHAP or glycerone-phosphate) with glyceraldehyde 3-phosphate (G3P) to form fructose 1,6-bisphosphate (FBP) in gluconeogenesis and the reverse reaction in glycolysis. This is Fructose-bisphosphate aldolase (fba) from Mycoplasma genitalium (strain ATCC 33530 / DSM 19775 / NCTC 10195 / G37) (Mycoplasmoides genitalium).